Here is a 345-residue protein sequence, read N- to C-terminus: Adenine deaminase (345 aa).

Residues His-24, His-26, and His-204 each contribute to the Zn(2+) site. The active-site Proton donor is the Glu-207. Asp-285 lines the Zn(2+) pocket. Asp-286 is a binding site for substrate.

The protein belongs to the metallo-dependent hydrolases superfamily. Adenosine and AMP deaminases family. Adenine deaminase type 2 subfamily. Zn(2+) serves as cofactor.

It catalyses the reaction adenine + H2O + H(+) = hypoxanthine + NH4(+). Functionally, catalyzes the hydrolytic deamination of adenine to hypoxanthine. Plays an important role in the purine salvage pathway and in nitrogen catabolism. The sequence is that of Adenine deaminase from Albidiferax ferrireducens (strain ATCC BAA-621 / DSM 15236 / T118) (Rhodoferax ferrireducens).